Here is a 1937-residue protein sequence, read N- to C-terminus: Myosin-2 (1937 aa).

A Myosin N-terminal SH3-like domain is found at 33-82; it reads DAKTSVFVAEPKESFVKGTIQSREGGKVTVKTDAGATLTVKEDQVFPMNP. A phosphothreonine mark is found at threonine 64 and threonine 69. Residues 86-780 enclose the Myosin motor domain; it reads DKIEDMAMMT…LLGLLEEMRD (695 aa). Lysine 130 is subject to N6,N6,N6-trimethyllysine. Position 179–186 (179–186) interacts with ATP; the sequence is GESGAGKT. At tyrosine 387 the chain carries Phosphotyrosine. Residue threonine 417 is modified to Phosphothreonine. A Phosphoserine modification is found at serine 623. The tract at residues 657–679 is actin-binding; sequence LNKLMTNLRSTHPHFVRCIIPNE. Residue histidine 755 is modified to Pros-methylhistidine. Residues 759–773 form an actin-binding region; sequence KFGHTKVFFKAGLLG. The IQ domain occupies 783–812; that stretch reads LAQIITRTQARCRGFLARVEYQKMVERRES. Residues 841-1937 are a coiled coil; it reads LLKSAETEKE…EVHTKIISEE (1097 aa). At serine 1094 the chain carries Phosphoserine. 2 disordered regions span residues 1124 to 1145 and 1151 to 1170; these read IEAE…SREL and RLEE…KKRE. Residues 1126 to 1145 are compositionally biased toward basic and acidic residues; that stretch reads AERASRAKAEKQRSDLSREL. Phosphoserine occurs at positions 1160 and 1235. Threonine 1239 bears the Phosphothreonine mark. Serine 1241 carries the post-translational modification Phosphoserine. Threonine 1253 is modified (phosphothreonine). A Phosphoserine modification is found at serine 1259. At threonine 1284 the chain carries Phosphothreonine. Residues serine 1290, serine 1301, and serine 1304 each carry the phosphoserine modification. Tyrosine 1462 is modified (phosphotyrosine). Residue threonine 1465 is modified to Phosphothreonine. Serine 1472 bears the Phosphoserine mark. A Phosphotyrosine modification is found at tyrosine 1490. The residue at position 1493 (serine 1493) is a Phosphoserine. Threonine 1499 is modified (phosphothreonine). Serine 1512 carries the post-translational modification Phosphoserine. Residue threonine 1515 is modified to Phosphothreonine. Phosphoserine occurs at positions 1540, 1552, 1572, 1712, and 1724. Phosphothreonine occurs at positions 1728 and 1734. A Phosphoserine modification is found at serine 1737. Residues 1883 to 1913 are disordered; that stretch reads QAEEAEEQSNTNLSKFRKLQHELEEAEERAD.

The protein belongs to the TRAFAC class myosin-kinesin ATPase superfamily. Myosin family. Muscle myosin is a hexameric protein that consists of 2 heavy chain subunits (MHC), 2 alkali light chain subunits (MLC) and 2 regulatory light chain subunits (MLC-2). Interacts with GCSAM.

The protein localises to the cytoplasm. It localises to the myofibril. Myosins are actin-based motor molecules with ATPase activity essential for muscle contraction. The sequence is that of Myosin-2 (MYH2) from Equus caballus (Horse).